The following is a 283-amino-acid chain: Acetylglutamate kinase (283 aa).

Substrate-binding positions include 64–65 (GG), Arg-86, and Asn-181.

It belongs to the acetylglutamate kinase family. ArgB subfamily.

The protein resides in the cytoplasm. The enzyme catalyses N-acetyl-L-glutamate + ATP = N-acetyl-L-glutamyl 5-phosphate + ADP. It functions in the pathway amino-acid biosynthesis; L-arginine biosynthesis; N(2)-acetyl-L-ornithine from L-glutamate: step 2/4. Its function is as follows. Catalyzes the ATP-dependent phosphorylation of N-acetyl-L-glutamate. The polypeptide is Acetylglutamate kinase (Sulfurimonas denitrificans (strain ATCC 33889 / DSM 1251) (Thiomicrospira denitrificans (strain ATCC 33889 / DSM 1251))).